We begin with the raw amino-acid sequence, 347 residues long: tRNA N6-adenosine threonylcarbamoyltransferase (347 aa).

Histidine 111 and histidine 115 together coordinate Fe cation. Residues 134-138 (LISGG), aspartate 167, glycine 180, and asparagine 277 each bind substrate. Residue aspartate 305 participates in Fe cation binding.

It belongs to the KAE1 / TsaD family. Fe(2+) serves as cofactor.

The protein resides in the cytoplasm. The enzyme catalyses L-threonylcarbamoyladenylate + adenosine(37) in tRNA = N(6)-L-threonylcarbamoyladenosine(37) in tRNA + AMP + H(+). Its function is as follows. Required for the formation of a threonylcarbamoyl group on adenosine at position 37 (t(6)A37) in tRNAs that read codons beginning with adenine. Is involved in the transfer of the threonylcarbamoyl moiety of threonylcarbamoyl-AMP (TC-AMP) to the N6 group of A37, together with TsaE and TsaB. TsaD likely plays a direct catalytic role in this reaction. The polypeptide is tRNA N6-adenosine threonylcarbamoyltransferase (Actinobacillus pleuropneumoniae serotype 5b (strain L20)).